The sequence spans 1124 residues: Eukaryotic translation initiation factor 3 subunit A (1124 aa).

Residues 96–124 (LKMAEERTEQAQQQSSQATVDIDDLDNLA) are a coiled coil. In terms of domain architecture, PCI spans 317 to 498 (IQRMTTHVLI…ECVHFGTDLS (182 aa)). Composition is skewed to basic and acidic residues over residues 812–851 (EERRRIEEELRKQKEEADRIERERRAEERRIQDEKNRQLA) and 860–883 (EVERRRREELEQMKEADGRRERRP). Residues 812–1124 (EERRRIEEEL…EEGWTDVKHR (313 aa)) are disordered. Over residues 900–910 (PAAAAPANPAA) the composition is skewed to low complexity. 4 stretches are compositionally biased toward basic and acidic residues: residues 928-952 (PRERGGETGPKDKWRTGPEDHEKDG), 960-990 (RGGDMRRGQDDRGPIRRGGGEERGEREDRGP), 1007-1048 (PRRD…RGGG), and 1063-1100 (DDNRRGPRDEGRQDTWRNTRQDAAPKQKEDRPQREARP).

This sequence belongs to the eIF-3 subunit A family. Component of the eukaryotic translation initiation factor 3 (eIF-3) complex.

It is found in the cytoplasm. RNA-binding component of the eukaryotic translation initiation factor 3 (eIF-3) complex, which is involved in protein synthesis of a specialized repertoire of mRNAs and, together with other initiation factors, stimulates binding of mRNA and methionyl-tRNAi to the 40S ribosome. The eIF-3 complex specifically targets and initiates translation of a subset of mRNAs involved in cell proliferation. The chain is Eukaryotic translation initiation factor 3 subunit A from Anopheles gambiae (African malaria mosquito).